The chain runs to 357 residues: MKKGSLAPNLKLSLPPPDEVNLSKFLTESGTFKDGDLLVNRDGVRIVSQSEVEAPSVIQPSDNQLCLADFEAVKVIGKGNGGIVRLVQHKWTGQFFALKVIQMNIEESMRKHIAQELRINQSSQCPYVVISYQSFFDNGAISIILEYMDGGSLADFLKKVKTIPERYLAAICKQVLKGLWYLHHEKHIIHRDLKPSNLLINHIGDVKITDFGVSAVLASTSGLANTFVGTYNYMSPERILGGAYGYRSDIWSLGLVLLECATGVFPYSPPQADEGWVNVYELMETIVDQPAPSAPPDQFSPQFCSFISACVQKDQKDRLSANELMRHPFITMYDDLDIDLGSYFTSAGPPLATLTEL.

The Protein kinase domain occupies 70–330 (FEAVKVIGKG…ANELMRHPFI (261 aa)). ATP-binding positions include 76-84 (IGKGNGGIV) and lysine 99. Aspartate 192 functions as the Proton acceptor in the catalytic mechanism.

The protein belongs to the protein kinase superfamily. STE Ser/Thr protein kinase family. MAP kinase kinase subfamily. As to quaternary structure, interacts with SIPK.

The catalysed reaction is L-tyrosyl-[protein] + ATP = O-phospho-L-tyrosyl-[protein] + ADP + H(+). It catalyses the reaction L-seryl-[protein] + ATP = O-phospho-L-seryl-[protein] + ADP + H(+). The enzyme catalyses L-threonyl-[protein] + ATP = O-phospho-L-threonyl-[protein] + ADP + H(+). In terms of biological role, phosphorylates myelin basic protein (MBP) in vitro. May be involved in disease resistance. In Nicotiana tabacum (Common tobacco), this protein is Mitogen-activated protein kinase kinase SIPKK.